The following is a 1523-amino-acid chain: ATP-binding cassette sub-family C member 3 (1523 aa).

At 1 to 35 the chain is on the extracellular side; sequence MDRLCGSGELGSKFWDSNLSIYTNTPDLTPCFQNS. N-linked (GlcNAc...) asparagine glycosylation is present at N18. The helical transmembrane segment at 36–56 threads the bilayer; the sequence is LLAWVPCIYLWAALPCYLFYL. Over 57–75 the chain is Cytoplasmic; the sequence is RHHQLGYIVLSWLSRLKTA. A helical transmembrane segment spans residues 76 to 96; the sequence is LGVLLWCVSWVDLFYSFHGLI. At 97 to 102 the chain is on the extracellular side; sequence HGSSPA. Residues 103 to 123 traverse the membrane as a helical segment; the sequence is PVFFVTPLVVGITMLLATLLI. The Cytoplasmic portion of the chain corresponds to 124–129; that stretch reads QYERLR. Residues 130–150 form a helical membrane-spanning segment; sequence GVQSSGVLIIFWLLCVICAII. The Extracellular segment spans residues 151-170; it reads PFRSKILSALAEGKILDPFR. The helical transmembrane segment at 171–191 threads the bilayer; it reads FTTFYIYFALVFCALILSCFK. Residues 192–301 lie on the Cytoplasmic side of the membrane; that stretch reads EKPPLFSPEN…KSKQPSFLRA (110 aa). A helical transmembrane segment spans residues 302 to 324; it reads LVRTFTSSLLMSACFNLIQNLLG. One can recognise an ABC transmembrane type-1 1 domain in the interval 310–593; the sequence is LLMSACFNLI…LPQLISGLTQ (284 aa). Residues 325–345 lie on the Extracellular side of the membrane; the sequence is FVNPQLLSILIRFISDPTAPT. A helical membrane pass occupies residues 346–366; sequence WWGFLLAGLMFLSSTMQTLIL. Residues 367-419 lie on the Cytoplasmic side of the membrane; that stretch reads HQYYHCIFVMALRLRTAIIGVIYRKALVITNSVKRESTVGEMVNLMSVDAQRF. Residues 420–440 form a helical membrane-spanning segment; the sequence is MDVSPFINLLWSAPLQVILAI. Y441 is a topological domain (extracellular). The chain crosses the membrane as a helical span at residues 442–462; that stretch reads FLWQILGPSALAGVAVIVLLI. The Cytoplasmic segment spans residues 463–535; the sequence is PLNGAVSMKM…KGAYLQAIST (73 aa). A helical membrane pass occupies residues 536–556; the sequence is FIWICTPFLVTLITLGVYVYV. The Extracellular segment spans residues 557-567; sequence DESNVLDAEKA. The chain crosses the membrane as a helical span at residues 568-588; that stretch reads FVSLSLFNILKIPLNMLPQLI. Residues 589–967 are Cytoplasmic-facing; that stretch reads SGLTQASVSL…YAKSMGLCTT (379 aa). Residues 626–850 enclose the ABC transporter 1 domain; the sequence is ITIHNGTFTW…DGSFANFLRN (225 aa). 660–667 contributes to the ATP binding site; it reads GPVGCGKS. S903 and S906 each carry phosphoserine. The segment covering 903-915 has biased composition (polar residues); that stretch reads SSLSSEGEVQNRT. The tract at residues 903-923 is disordered; the sequence is SSLSSEGEVQNRTMPKKHTNS. An ABC transmembrane type-1 2 domain is found at 967–1248; it reads TLSICLLYGG…MIRMISDLES (282 aa). Residues 968–988 traverse the membrane as a helical segment; sequence LSICLLYGGQSAAAIGANVWL. Over 989 to 1013 the chain is Extracellular; that stretch reads SAWSNDAEEHGQQNKTSVRLGVYAA. An N-linked (GlcNAc...) asparagine glycan is attached at N1002. A helical membrane pass occupies residues 1014 to 1034; the sequence is LGILQGLLVMLSAFTMVVGAI. Residues 1035 to 1071 are Cytoplasmic-facing; it reads QAARLLHEALLHNKIRSPQSFFDTTPSGRILNRFSKD. A helical transmembrane segment spans residues 1072-1092; it reads IYVIDEVLAPTILMLLNSFFT. Over 1093–1096 the chain is Extracellular; it reads SIST. Residues 1097 to 1117 form a helical membrane-spanning segment; the sequence is IMVIVASTPLFMVVVLPLAVL. Residues 1118 to 1191 lie on the Cytoplasmic side of the membrane; that stretch reads YGFVQRFYVA…YPYIASNRWL (74 aa). The helical transmembrane segment at 1192-1212 threads the bilayer; sequence GVHVEFVGNCVVLFAALFAVI. Topologically, residues 1213 to 1219 are extracellular; the sequence is GRNSLNP. A helical membrane pass occupies residues 1220–1240; the sequence is GLVGLSVSYALQVTMALNWMI. At 1241-1523 the chain is on the cytoplasmic side; the sequence is RMISDLESNI…YGMAKDAGLA (283 aa). An ABC transporter 2 domain is found at 1287 to 1519; that stretch reads FRNYSVRYRP…GGIFYGMAKD (233 aa). 1319–1326 contributes to the ATP binding site; sequence GRTGAGKS.

The protein belongs to the ABC transporter superfamily. ABCC family. Conjugate transporter (TC 3.A.1.208) subfamily. Detected throughout the gastrointestinal tract, liver, lung, pancreas, bladder, gall bladder and at low levels in the adrenal gland.

It localises to the basolateral cell membrane. The protein localises to the basal cell membrane. The enzyme catalyses an S-substituted glutathione(in) + ATP + H2O = an S-substituted glutathione(out) + ADP + phosphate + H(+). The catalysed reaction is ATP + H2O + xenobioticSide 1 = ADP + phosphate + xenobioticSide 2.. It catalyses the reaction 17beta-estradiol 17-O-(beta-D-glucuronate)(in) + ATP + H2O = 17beta-estradiol 17-O-(beta-D-glucuronate)(out) + ADP + phosphate + H(+). It carries out the reaction dehydroepiandrosterone 3-sulfate(in) + ATP + H2O = dehydroepiandrosterone 3-sulfate(out) + ADP + phosphate + H(+). The enzyme catalyses leukotriene C4(in) + ATP + H2O = leukotriene C4(out) + ADP + phosphate + H(+). The catalysed reaction is taurocholate(in) + ATP + H2O = taurocholate(out) + ADP + phosphate + H(+). It catalyses the reaction glycocholate(in) + ATP + H2O = glycocholate(out) + ADP + phosphate + H(+). It carries out the reaction taurolithocholate 3-sulfate(in) + ATP + H2O = taurolithocholate 3-sulfate(out) + ADP + phosphate + H(+). The enzyme catalyses taurochenodeoxycholate 3-sulfate(in) + ATP + H2O = taurochenodeoxycholate 3-sulfate(out) + ADP + phosphate + H(+). The catalysed reaction is (4Z,15Z)-bilirubin IXalpha C8-beta-D-glucuronoside(in) + ATP + H2O = (4Z,15Z)-bilirubin IXalpha C8-beta-D-glucuronoside(out) + ADP + phosphate + H(+). It catalyses the reaction (4Z,15Z)-bilirubin IXalpha C8,C12-beta-D-bisglucuronoside(in) + ATP + H2O = (4Z,15Z)-bilirubin IXalpha C8,C12-beta-D-bisglucuronoside(out) + ADP + phosphate + H(+). In terms of biological role, ATP-dependent transporter of the ATP-binding cassette (ABC) family that binds and hydrolyzes ATP to enable active transport of various substrates including many drugs, toxicants and endogenous compound across cell membranes. Transports glucuronide conjugates such as bilirubin diglucuronide, estradiol-17-beta-o-glucuronide and GSH conjugates such as leukotriene C4 (LTC4). Transports also various bile salts (taurocholate, glycocholate, taurochenodeoxycholate-3-sulfate, taurolithocholate- 3-sulfate). Does not contribute substantially to bile salt physiology but provides an alternative route for the export of bile acids and glucuronides from cholestatic hepatocytes. May contribute to regulate the transport of organic compounds in testes across the blood-testis-barrier. This is ATP-binding cassette sub-family C member 3 (Abcc3) from Mus musculus (Mouse).